The chain runs to 1205 residues: Nitric oxide synthase 3 (1205 aa).

2 disordered regions span residues 1 to 20 (MGNL…LGLG) and 26 to 73 (CGKQ…FPRV). Over residues 33–47 (SPAPEPSWAPAPATP) the composition is skewed to pro residues. Zn(2+) is bound by residues C96 and C101. Residues 100 to 489 (RCLGSLVLPR…PDPWKGSAAK (390 aa)) are interaction with NOSIP. A (6R)-L-erythro-5,6,7,8-tetrahydrobiopterin-binding site is contributed by S104. S116 carries the phosphoserine modification. C186 is a binding site for heme b. Residues Q250, W359, Y360, and E364 each contribute to the L-arginine site. R368 is a binding site for (6R)-L-erythro-5,6,7,8-tetrahydrobiopterin. N369 serves as a coordination point for L-arginine. Positions 449, 450, and 463 each coordinate (6R)-L-erythro-5,6,7,8-tetrahydrobiopterin. Y478 lines the heme b pocket. Residue T498 is modified to Phosphothreonine. Residues S529, E530, T531, R533, S575, and T576 each coordinate FMN. 3 positions are modified to phosphoserine: S618, S636, and S641. Residues S657, C664, E690, and Q694 each contribute to the FMN site. R781 lines the NADP(+) pocket. Residues 796 to 850 (LQYQPGDHISPHPPPRSSHRPGQGGPRVAPFSERPLMPRTPPPGGPPPSWVRDPR) are disordered. H803 provides a ligand contact to FAD. Pro residues predominate over residues 833 to 844 (PRTPPPGGPPPS). The FAD site is built by R939, Y941, S942, T957, and A959. Positions 1018, 1051, 1080, 1081, 1087, 1089, and 1091 each coordinate NADP(+). T1177 bears the Phosphothreonine mark. Phosphoserine occurs at positions 1179 and 1181.

This sequence belongs to the NOS family. As to quaternary structure, homodimer. Interacts with NOSIP and NOSTRIN. Interacts with HSP90AB1. Forms a complex with ASL, ASS1 and SLC7A1; the complex regulates cell-autonomous L-arginine synthesis and citrulline recycling while channeling extracellular L-arginine to nitric oxide synthesis pathway. It depends on heme b as a cofactor. The cofactor is FAD. FMN serves as cofactor. Requires (6R)-L-erythro-5,6,7,8-tetrahydrobiopterin as cofactor.

Its subcellular location is the membrane. It is found in the caveola. The protein localises to the cytoplasm. It localises to the cytoskeleton. The protein resides in the golgi apparatus. Its subcellular location is the cell membrane. The catalysed reaction is 2 L-arginine + 3 NADPH + 4 O2 + H(+) = 2 L-citrulline + 2 nitric oxide + 3 NADP(+) + 4 H2O. Its activity is regulated as follows. Stimulated by calcium/calmodulin. Inhibited by NOSIP and NOSTRIN. Produces nitric oxide (NO) which is implicated in vascular smooth muscle relaxation through a cGMP-mediated signal transduction pathway. NO mediates vascular endothelial growth factor (VEGF)-induced angiogenesis in coronary vessels and promotes blood clotting through the activation of platelets. The chain is Nitric oxide synthase 3 (NOS3) from Ovis aries (Sheep).